Here is a 152-residue protein sequence, read N- to C-terminus: Cell division protein SepF (152 aa).

It belongs to the SepF family. In terms of assembly, homodimer. Interacts with FtsZ.

The protein resides in the cytoplasm. In terms of biological role, cell division protein that is part of the divisome complex and is recruited early to the Z-ring. Probably stimulates Z-ring formation, perhaps through the cross-linking of FtsZ protofilaments. Its function overlaps with FtsA. This is Cell division protein SepF from Listeria monocytogenes serotype 4b (strain CLIP80459).